Consider the following 409-residue polypeptide: uncharacterized protein (409 aa).

A run of 12 helical transmembrane segments spans residues 3-23 (IIVK…PTTE), 43-63 (ITQI…LSLG), 73-93 (PIVL…IFSV), 95-115 (IEML…GSVI), 135-155 (ILSP…GYII), 162-182 (YVFV…YKIL), 209-229 (ILWL…GFFI), 248-268 (KLAF…GYLI), 283-303 (FIFS…LEFI), 309-329 (LAIS…SLLI), 346-366 (TAGS…TYCV), and 379-399 (LLCL…CILY).

This sequence belongs to the major facilitator superfamily. Bcr/CmlA family.

Its subcellular location is the cell inner membrane. This is an uncharacterized protein from Rickettsia typhi (strain ATCC VR-144 / Wilmington).